A 64-amino-acid chain; its full sequence is uncharacterized protein (64 aa).

This is an uncharacterized protein from Enterobacteria phage T4 (Bacteriophage T4).